A 247-amino-acid polypeptide reads, in one-letter code: Osmotin-like protein NP24-I (247 aa).

Residues 1-21 form the signal peptide; sequence MGYLTSSFVLFFLLCVTYTYA. 8 cysteine pairs are disulfide-bonded: C30–C225, C72–C82, C87–C93, C141–C213, C146–C196, C154–C164, C168–C177, and C178–C183.

The protein belongs to the thaumatin family. In terms of tissue distribution, highest levels of both isoforms found in the outer pericarp, with smaller amounts in the inner pericarp.

Its subcellular location is the cytoplasm. It localises to the vacuole. It carries out the reaction Endohydrolysis of (1-&gt;3)- or (1-&gt;4)-linkages in beta-D-glucans when the glucose residue whose reducing group is involved in the linkage to be hydrolyzed is itself substituted at C-3.. Has antifungal activity against P.betae and F.dahliae. May be involved in disease resistance in tomatoes and/or have a possible role in fruit development and ripening. Binds to beta-glucans and exhibits beta-1,3-D-glucanase activity. This is Osmotin-like protein NP24-I from Solanum lycopersicum (Tomato).